A 329-amino-acid polypeptide reads, in one-letter code: Malate dehydrogenase (329 aa).

12-18 is a binding site for NAD(+); the sequence is GAAGQIG. Arg95 and Arg101 together coordinate substrate. NAD(+) contacts are provided by residues Asn108, Gln115, and 132-134; that span reads VGN. The substrate site is built by Asn134 and Arg165. The active-site Proton acceptor is His190.

The protein belongs to the LDH/MDH superfamily. MDH type 2 family. In terms of assembly, homodimer.

The catalysed reaction is (S)-malate + NAD(+) = oxaloacetate + NADH + H(+). Substrate inhibition is observed at high concentrations of oxaloacetate. Its function is as follows. Catalyzes the reversible oxidation of malate to oxaloacetate. Catalyzes the reduction of oxaloacetate more efficiently than the oxidation of malate. The protein is Malate dehydrogenase of Syntrophobacter fumaroxidans (strain DSM 10017 / MPOB).